We begin with the raw amino-acid sequence, 721 residues long: Catalase-peroxidase (721 aa).

The segment at residues 89-212 is a cross-link (tryptophyl-tyrosyl-methioninium (Trp-Tyr) (with M-238)); sequence WHSAGTYRTG…LAAVQMGLIY (124 aa). The active-site Proton acceptor is the His90. A cross-link (tryptophyl-tyrosyl-methioninium (Tyr-Met) (with W-89)) is located at residues 212–238; it reads YVNPEGPNGDPDPFAAAVDIRETFARM. His253 provides a ligand contact to heme b.

It belongs to the peroxidase family. Peroxidase/catalase subfamily. Homodimer or homotetramer. It depends on heme b as a cofactor. Formation of the three residue Trp-Tyr-Met cross-link is important for the catalase, but not the peroxidase activity of the enzyme.

It carries out the reaction H2O2 + AH2 = A + 2 H2O. The catalysed reaction is 2 H2O2 = O2 + 2 H2O. Bifunctional enzyme with both catalase and broad-spectrum peroxidase activity. This chain is Catalase-peroxidase, found in Shewanella baltica (strain OS195).